The sequence spans 189 residues: Interferon alpha-13 (189 aa).

The first 23 residues, M1–G23, serve as a signal peptide directing secretion. Cystine bridges form between C24/C122 and C52/C162. N-linked (GlcNAc...) asparagine glycans are attached at residues N94 and N101.

This sequence belongs to the alpha/beta interferon family.

Its subcellular location is the secreted. Exhibits antiviral activity against Theiler's virus, Mengo virus and vesicular stomatitis virus. Interferons alpha stimulate the production of two enzymes: a protein kinase and an oligoadenylate synthetase. This chain is Interferon alpha-13 (Ifna13), found in Mus musculus (Mouse).